Consider the following 279-residue polypeptide: Proline-rich protein 23D1 (279 aa).

2 disordered regions span residues 1–60 (MYGY…PHLN) and 247–270 (LRPM…RPPS). Residues 15-33 (TEPQNDNEGETSLATTQMN) are compositionally biased toward polar residues.

It belongs to the PRR23 family.

This Homo sapiens (Human) protein is Proline-rich protein 23D1 (PRR23D1).